Reading from the N-terminus, the 143-residue chain is Nucleoside diphosphate kinase (143 aa).

ATP-binding residues include Lys11, Phe59, Arg87, Thr93, Arg104, and Asn114. His117 (pros-phosphohistidine intermediate) is an active-site residue.

Belongs to the NDK family. Homotetramer. Mg(2+) is required as a cofactor.

Its subcellular location is the cytoplasm. The enzyme catalyses a 2'-deoxyribonucleoside 5'-diphosphate + ATP = a 2'-deoxyribonucleoside 5'-triphosphate + ADP. It catalyses the reaction a ribonucleoside 5'-diphosphate + ATP = a ribonucleoside 5'-triphosphate + ADP. Its function is as follows. Major role in the synthesis of nucleoside triphosphates other than ATP. The ATP gamma phosphate is transferred to the NDP beta phosphate via a ping-pong mechanism, using a phosphorylated active-site intermediate. The sequence is that of Nucleoside diphosphate kinase from Acinetobacter baylyi (strain ATCC 33305 / BD413 / ADP1).